A 193-amino-acid chain; its full sequence is Bcl-2-like protein 2 (193 aa).

A2 is subject to N-acetylalanine. The BH4 motif lies at 9–29 (DTRALVADFVGYKLRQKGYVC). The BH1 signature appears at 85–104 (ELFQGGPNWGRLVAFFVFGA). Residues 136-151 (DWIHSSGGWAEFTALY) carry the BH2 motif.

This sequence belongs to the Bcl-2 family. Interacts with HIF3A (via C-terminus domain). Interacts with BOP.

It is found in the mitochondrion membrane. Its function is as follows. Promotes cell survival. Blocks dexamethasone-induced apoptosis. Mediates survival of postmitotic Sertoli cells by suppressing death-promoting activity of BAX. In Bos taurus (Bovine), this protein is Bcl-2-like protein 2 (BCL2L2).